The following is a 201-amino-acid chain: ATP-dependent Clp protease proteolytic subunit (201 aa).

The active-site Nucleophile is S105. H130 is an active-site residue.

Belongs to the peptidase S14 family. As to quaternary structure, fourteen ClpP subunits assemble into 2 heptameric rings which stack back to back to give a disk-like structure with a central cavity, resembling the structure of eukaryotic proteasomes.

The protein resides in the cytoplasm. It catalyses the reaction Hydrolysis of proteins to small peptides in the presence of ATP and magnesium. alpha-casein is the usual test substrate. In the absence of ATP, only oligopeptides shorter than five residues are hydrolyzed (such as succinyl-Leu-Tyr-|-NHMec, and Leu-Tyr-Leu-|-Tyr-Trp, in which cleavage of the -Tyr-|-Leu- and -Tyr-|-Trp bonds also occurs).. Cleaves peptides in various proteins in a process that requires ATP hydrolysis. Has a chymotrypsin-like activity. Plays a major role in the degradation of misfolded proteins. The chain is ATP-dependent Clp protease proteolytic subunit from Aquifex aeolicus (strain VF5).